Reading from the N-terminus, the 230-residue chain is Small ribosomal subunit protein uS3 (230 aa).

Positions 39-107 (VRKFLVEKLQ…PAQINIAEIR (69 aa)) constitute a KH type-2 domain.

Belongs to the universal ribosomal protein uS3 family. As to quaternary structure, part of the 30S ribosomal subunit. Forms a tight complex with proteins S10 and S14.

Binds the lower part of the 30S subunit head. Binds mRNA in the 70S ribosome, positioning it for translation. This chain is Small ribosomal subunit protein uS3, found in Shewanella baltica (strain OS223).